We begin with the raw amino-acid sequence, 177 residues long: Large ribosomal subunit protein uL6 (177 aa).

A disordered region spans residues 151–177 (YRPPEPYKGKGIRYSDEHVVRKEAKKK). Basic and acidic residues predominate over residues 155 to 177 (EPYKGKGIRYSDEHVVRKEAKKK).

Belongs to the universal ribosomal protein uL6 family. Part of the 50S ribosomal subunit.

Its function is as follows. This protein binds to the 23S rRNA, and is important in its secondary structure. It is located near the subunit interface in the base of the L7/L12 stalk, and near the tRNA binding site of the peptidyltransferase center. The protein is Large ribosomal subunit protein uL6 of Psychrobacter sp. (strain PRwf-1).